The primary structure comprises 478 residues: UDP-N-acetylmuramate--L-alanine ligase (478 aa).

Position 125-131 (Gly-125–Thr-131) interacts with ATP.

Belongs to the MurCDEF family.

The protein resides in the cytoplasm. The catalysed reaction is UDP-N-acetyl-alpha-D-muramate + L-alanine + ATP = UDP-N-acetyl-alpha-D-muramoyl-L-alanine + ADP + phosphate + H(+). It functions in the pathway cell wall biogenesis; peptidoglycan biosynthesis. In terms of biological role, cell wall formation. This chain is UDP-N-acetylmuramate--L-alanine ligase, found in Dichelobacter nodosus (strain VCS1703A).